The chain runs to 146 residues: Linear conopeptide (146 aa).

The first 19 residues, 1–19 (MLRLIIAAAVLVSACLAYP), serve as a signal peptide directing secretion. A propeptide spanning residues 20–34 (QRREGAPADAANLQS) is cleaved from the precursor. Residue Met-40 is modified to Methionine sulfoxide; partial; in Cn2. 2 propeptides span residues 58-80 (FLPFNPNLQMGYKRDFDENLEKR) and 104-146 (FLHN…DKEQ). Positions 107–146 (NEKGDKHPFANVDSADTDLGQFEPSAENKNGEFRFFDKEQ) are disordered. Residues 135–146 (KNGEFRFFDKEQ) show a composition bias toward basic and acidic residues.

As to expression, expressed by the venom duct.

The protein resides in the secreted. This chain is Linear conopeptide, found in Conus consors (Singed cone).